Here is a 450-residue protein sequence, read N- to C-terminus: Phosphoglucosamine mutase (450 aa).

The active-site Phosphoserine intermediate is Ser102. Residues Ser102, Asp244, Asp246, and Asp248 each contribute to the Mg(2+) site. Ser102 is modified (phosphoserine).

The protein belongs to the phosphohexose mutase family. It depends on Mg(2+) as a cofactor. Activated by phosphorylation.

The enzyme catalyses alpha-D-glucosamine 1-phosphate = D-glucosamine 6-phosphate. Functionally, catalyzes the conversion of glucosamine-6-phosphate to glucosamine-1-phosphate. This is Phosphoglucosamine mutase from Syntrophomonas wolfei subsp. wolfei (strain DSM 2245B / Goettingen).